The sequence spans 447 residues: Phosphoglucosamine mutase (447 aa).

Serine 102 functions as the Phosphoserine intermediate in the catalytic mechanism. 4 residues coordinate Mg(2+): serine 102, aspartate 241, aspartate 243, and aspartate 245. Residue serine 102 is modified to Phosphoserine.

This sequence belongs to the phosphohexose mutase family. Requires Mg(2+) as cofactor. In terms of processing, activated by phosphorylation.

The enzyme catalyses alpha-D-glucosamine 1-phosphate = D-glucosamine 6-phosphate. Catalyzes the conversion of glucosamine-6-phosphate to glucosamine-1-phosphate. The sequence is that of Phosphoglucosamine mutase from Pseudoalteromonas atlantica (strain T6c / ATCC BAA-1087).